Here is a 429-residue protein sequence, read N- to C-terminus: 3-phosphoshikimate 1-carboxyvinyltransferase (429 aa).

3-phosphoshikimate is bound by residues Lys21, Ser22, and Arg26. Lys21 is a binding site for phosphoenolpyruvate. Phosphoenolpyruvate-binding residues include Gly94 and Arg122. Positions 167, 169, 315, and 342 each coordinate 3-phosphoshikimate. Gln169 contacts phosphoenolpyruvate. Asp315 acts as the Proton acceptor in catalysis. Arg346 and Arg388 together coordinate phosphoenolpyruvate.

Belongs to the EPSP synthase family. Monomer.

It is found in the cytoplasm. It catalyses the reaction 3-phosphoshikimate + phosphoenolpyruvate = 5-O-(1-carboxyvinyl)-3-phosphoshikimate + phosphate. Its pathway is metabolic intermediate biosynthesis; chorismate biosynthesis; chorismate from D-erythrose 4-phosphate and phosphoenolpyruvate: step 6/7. Catalyzes the transfer of the enolpyruvyl moiety of phosphoenolpyruvate (PEP) to the 5-hydroxyl of shikimate-3-phosphate (S3P) to produce enolpyruvyl shikimate-3-phosphate and inorganic phosphate. This Desulforamulus reducens (strain ATCC BAA-1160 / DSM 100696 / MI-1) (Desulfotomaculum reducens) protein is 3-phosphoshikimate 1-carboxyvinyltransferase.